The following is a 376-amino-acid chain: MEVPRLDHALNSPTSPCEEVIKNLSLEAIQLCDRDGNKSQDSGIAEMEELPVPHNIKISNITCDSFKISWEMDSKSKDRITHYFIDLNKKENKNSNKFKHKDVPTKLVAKAVPLPMTVRGHWFLSPRTEYTVAVQTASKQVDGDYVVSEWSEIIEFCTADYSKVHLTQLLEKAEVIAGRMLKFSVFYRNQHKEYFDYVREHHGNAMQPSVKDNSGSHGSPISGKLEGIFFSCSTEFNTGKPPQDSPYGRYRFEIAAEKLFNPNTNLYFGDFYCMYTAYHYVILVIAPVGSPGDEFCKQRLPQLNSKDNKFLTCTEEDGVLVYHHAQDVILEVIYTDPVDLSVGTVAEITGHQLMSLSTANAKKDPSCKTCNISVGR.

Residues Ser-12 and Ser-15 each carry the phosphoserine modification. Asn-23 is a glycosylation site (N-linked (GlcNAc...) asparagine). The residue at position 25 (Ser-25) is a Phosphoserine. N-linked (GlcNAc...) asparagine glycosylation is present at Asn-37. One can recognise a Fibronectin type-III domain in the interval 52–161 (VPHNIKISNI…EIIEFCTADY (110 aa)).

Belongs to the PHYHIP family.

In terms of biological role, may play a role in the development of the central system. The protein is Phytanoyl-CoA hydroxylase-interacting protein-like (PHYHIPL) of Homo sapiens (Human).